Reading from the N-terminus, the 101-residue chain is Venom protein 214 (101 aa).

The N-terminal stretch at 1 to 16 (MIRYVLVIITCFLVAA) is a signal peptide.

In terms of processing, contains 3 disulfide bonds. In terms of tissue distribution, expressed by the venom gland.

Its subcellular location is the secreted. The protein is Venom protein 214 of Lychas mucronatus (Chinese swimming scorpion).